We begin with the raw amino-acid sequence, 469 residues long: Glutamate--tRNA ligase (469 aa).

The 'HIGH' region motif lies at 9-19 (PSPTGFLHVGG). 4 residues coordinate Zn(2+): C98, C100, C125, and D127. The 'KMSKS' region motif lies at 236–240 (KLSKR). K239 contacts ATP.

This sequence belongs to the class-I aminoacyl-tRNA synthetase family. Glutamate--tRNA ligase type 1 subfamily. As to quaternary structure, monomer. The cofactor is Zn(2+).

It localises to the cytoplasm. The catalysed reaction is tRNA(Glu) + L-glutamate + ATP = L-glutamyl-tRNA(Glu) + AMP + diphosphate. Functionally, catalyzes the attachment of glutamate to tRNA(Glu) in a two-step reaction: glutamate is first activated by ATP to form Glu-AMP and then transferred to the acceptor end of tRNA(Glu). The chain is Glutamate--tRNA ligase from Shewanella sediminis (strain HAW-EB3).